Here is a 124-residue protein sequence, read N- to C-terminus: Small ribosomal subunit protein uS12 (124 aa).

D89 is modified (3-methylthioaspartic acid). Positions 105 to 124 (QGVKNRKQARSRYGAKKEKS) are disordered. Over residues 108-118 (KNRKQARSRYG) the composition is skewed to basic residues.

Belongs to the universal ribosomal protein uS12 family. As to quaternary structure, part of the 30S ribosomal subunit. Contacts proteins S8 and S17. May interact with IF1 in the 30S initiation complex.

With S4 and S5 plays an important role in translational accuracy. Its function is as follows. Interacts with and stabilizes bases of the 16S rRNA that are involved in tRNA selection in the A site and with the mRNA backbone. Located at the interface of the 30S and 50S subunits, it traverses the body of the 30S subunit contacting proteins on the other side and probably holding the rRNA structure together. The combined cluster of proteins S8, S12 and S17 appears to hold together the shoulder and platform of the 30S subunit. This is Small ribosomal subunit protein uS12 (rpsL) from Mycolicibacterium smegmatis (strain ATCC 700084 / mc(2)155) (Mycobacterium smegmatis).